A 7094-amino-acid chain; its full sequence is Replicase polyprotein 1ab (7094 aa).

In terms of domain architecture, CoV Nsp1 globular spans 54 to 196 (PENHVMVDCR…PWVMYLRKCG (143 aa)). A BetaCoV Nsp1 C-terminal domain is found at 216-246 (FKVEDAYDLVHDEPKGKFSKKAYALIRGYRG). One can recognise a CoV Nsp2 N-terminal domain in the interval 250–519 (LLYVDQYGCD…LICKALYLDY (270 aa)). Residues Cys392, Cys397, Cys413, and Cys416 each coordinate Zn(2+). The tract at residues 392 to 416 (CEQDLCDFKGWVPGNMIDGFACTTC) is C4. A CoV Nsp2 middle domain is found at 524–713 (CGNLHQRELL…AQAFRSVAKV (190 aa)). In terms of domain architecture, CoV Nsp2 C-terminal spans 733–851 (RRRICLSGSK…LDQAWRVPCA (119 aa)). Residues 853 to 966 (RRVTFKEQPT…LYCAFTAPED (114 aa)) form the Ubiquitin-like 1 domain. One can recognise a Peptidase C16 1 domain in the interval 1036 to 1274 (DLESVIQDYE…IAQLYGSCIT (239 aa)). Cys1074 functions as the For PL1-PRO activity in the catalytic mechanism. Residues Cys1151, Cys1154, Cys1177, and Cys1179 each contribute to the Zn(2+) site. A C4-type 1 zinc finger spans residues 1151–1179 (CIKCDLALKLKGLDAMFFYGDVVSHVCKC). Catalysis depends on for PL1-PRO activity residues His1225 and Asp1236. In terms of domain architecture, Macro spans 1275–1435 (PNVCFVKGDI…LISKCQITAV (161 aa)). The region spanning 1491–1563 (DDARTFVQSN…VAQIKALFLD (73 aa)) is the DPUP domain. Residues 1562-1617 (LDKVDILLTVDGVNFTNRFVPVGENFGKSLGNVFCDGVNVTKHKCDINYKGKVFFQ) form the Ubiquitin-like 2 domain. The Peptidase C16 2 domain occupies 1631-1892 (SSFNFDQKEL…KIEYKPDLSQ (262 aa)). Residue Cys1671 is the For PL2-PRO activity of the active site. Zn(2+) contacts are provided by Cys1749, Cys1751, Cys1783, and Cys1785. The C4-type 2 zinc-finger motif lies at 1749–1785 (CKCGVKQEQRTGVDAVMHFGTLSREDLEIGYTVDCSC). Catalysis depends on for PL2-PRO activity residues His1828 and Asp1842. The 102-residue stretch at 1906–2007 (IKAQFKTFEK…TYFNRPLLVD (102 aa)) folds into the Nucleic acid-binding domain. The region spanning 2020 to 2169 (DDGGDISESD…ADNKVIYTTE (150 aa)) is the G2M domain. A run of 3 helical transmembrane segments spans residues 2138 to 2158 (ISAC…WIKI), 2199 to 2219 (ACII…NVIF), and 2227 to 2247 (IGFL…TFSL). The segment at 2138–2385 (ISACFNFIKW…ASFIKLFSLF (248 aa)) is HD1. Residues 2235–2296 (GKIAQWIKST…AIDVVQYEAD (62 aa)) form the 3Ecto domain. Disulfide bonds link Cys2251–Cys2275 and Cys2266–Cys2272. A run of 3 helical transmembrane segments spans residues 2313–2333 (LIVS…LISI), 2343–2363 (LFML…ANML), and 2365–2385 (AHVF…FSLF). The interval 2383–2473 (SLFRHVAYGC…ELKRPIQPTD (91 aa)) is Y1. In terms of domain architecture, CoV Nsp3 Y spans 2383–2750 (SLFRHVAYGC…LTTPFSLKGG (368 aa)). Positions 2387, 2392, 2397, 2400, 2433, 2436, 2440, and 2443 each coordinate Zn(2+). The ZF1 stretch occupies residues 2387 to 2400 (HVAYGCSKPGCLFC). Residues 2433-2443 (CSKHQWNCIDC) form a ZF2 region. Residues 2474 to 2566 (VAYHTVTDVK…MVDKNLITTA (93 aa)) are Y2. The coV-Y stretch occupies residues 2474–2750 (VAYHTVTDVK…LTTPFSLKGG (277 aa)). Residues 2567-2649 (NTGTSVTETM…DSVMSAVSAG (83 aa)) form a Y3 region. The segment at 2650–2750 (LELTDESCNN…LTTPFSLKGG (101 aa)) is Y4. 7 helical membrane-spanning segments follow: residues 2752-2772 (VFSY…IGLW), 2824-2844 (STFG…VAVV), 3009-3029 (VFDL…FLAL), 3031-3051 (ASSI…YYLI), 3063-3083 (IVFV…VFQV), 3090-3110 (VYAI…SVIM), and 3115-3135 (LVMY…SVVV). Residues 2752–3135 (VFSYFVYVCF…FCLLYISVVV (384 aa)) form an HD2 region. Residues 3149–3246 (LGTSVRSDGT…TASVSTSFLQ (98 aa)) form the Nsp4C domain. The Peptidase C30 domain maps to 3247-3549 (SGIVKMVNPT…YQQLAGIKLQ (303 aa)). Residues His3287 and Cys3391 each act as for 3CL-PRO activity in the active site. The next 7 membrane-spanning stretches (helical) occupy residues 3558–3578 (GIVC…TAFV), 3588–3608 (TNML…MLLV), 3614–3634 (YLTM…YLVV), 3657–3677 (TYTD…FVTL), 3684–3704 (LFSF…WYMG), 3711–3731 (ILLM…LSMA), and 3755–3775 (IVLV…GLFS). The interval 3558–3775 (GIVCWIMAST…IISCYWGLFS (218 aa)) is HD3. Positions 3837–3925 (SKLTDVKCAN…DYAKDNTVLQ (89 aa)) constitute a RdRp Nsp7 cofactor domain. One can recognise a RdRp Nsp8 cofactor domain in the interval 3926 to 4122 (ALQSEFVNMA…HNEVSATVLQ (197 aa)). A Nsp9 ssRNA-binding domain is found at 4123 to 4232 (NNELMPAKLK…GTISSTVRLQ (110 aa)). In terms of domain architecture, ExoN/MTase coactivator spans 4233–4370 (AGTATEYASN…CVSTDTTVQS (138 aa)). Positions 4306, 4309, 4315, 4322, 4348, 4351, 4359, and 4361 each coordinate Zn(2+). Zinc fingers lie at residues 4306–4322 (CIYC…DGLC) and 4348–4361 (CQVC…SCSC). One can recognise a NiRAN domain in the interval 4375–4630 (FLNRVRGTSV…DCELYVNNAY (256 aa)). Residues Asn4578 and Asp4587 each coordinate Mn(2+). Residues 4631-4729 (RLFDLVQYDF…MNMDVDTHRY (99 aa)) enclose the Nsp12 Interface domain. Residues His4660, Cys4666, Cys4671, Cys4675, and Cys4852 each coordinate Zn(2+). Residues 4730–5297 (RLSLKDLLLY…NMYLRSAVMQ (568 aa)) form the Nsp12 RNA-dependent RNA polymerase domain. Residues 4732–4946 (SLKDLLLYAA…HQKCLKSIAA (215 aa)) are rdRp Fingers N-ter. Residues 4947–4985 (TRGVPVVIGTTKFYGGWDDMLRRLIKDVDNPVLMGWDYP) form a rdRp Palm N-ter region. Residues 4977–5139 (PVLMGWDYPK…CYNSDYASKG (163 aa)) enclose the RdRp catalytic domain. Residues 4986-5044 (KCDRAMPNILRIVSSLVLARKHEACCSQSDRFYRLANECAQVLSEIVMCGGCYYVKPGG) are rdRp Fingers C-ter. Positions 5007, 5010, and 5011 each coordinate Zn(2+). The rdRp Palm C-ter stretch occupies residues 5045 to 5180 (TSSGDATTAF…NNGPHEFCSQ (136 aa)). Residues Ser5124, Asp5125, and Asp5126 contribute to the active site. The segment at 5181–5297 (HTMLVKMDGD…NMYLRSAVMQ (117 aa)) is rdRp Thumb. One can recognise a CV ZBD domain in the interval 5298–5410 (SVGACVVCSS…DDFNRIASCK (113 aa)). The Zn(2+) site is built by Cys5302, Cys5305, Cys5313, Cys5316, Cys5323, Cys5326, His5330, His5336, Cys5347, Cys5352, Cys5369, and His5372. Residues 5553–5734 (SVLETFQNNV…MCCLGPDIFL (182 aa)) form the (+)RNA virus helicase ATP-binding domain. 5578–5585 (GPPGTGKS) is a binding site for ATP. The (+)RNA virus helicase C-terminal domain maps to 5735-5904 (GTCYRCPKEI…VETRVQCSTN (170 aa)). Positions 5971–6186 (LFITKEEAVK…RCLAVYDCFC (216 aa)) constitute an ExoN domain. Catalysis depends on residues Asp5989, Glu5991, and Glu6090. Zn(2+) contacts are provided by Cys6106, Cys6109, Cys6125, His6128, His6156, Cys6160, and His6163. Residues His6167 and Asp6172 contribute to the active site. Position 6178 (Cys6178) interacts with Zn(2+). The 227-residue stretch at 6195 to 6421 (YPIISNELSI…NLWNTFTKLQ (227 aa)) folds into the N7-MTase domain. Position 6230-6236 (6230-6236 (DIGNPKA)) interacts with S-adenosyl-L-methionine. The interval 6308–6322 (CNGGSLYVNKHAFHT) is gpppA-binding. Residues Cys6346, Cys6367, Cys6378, and His6381 each coordinate Zn(2+). The region spanning 6422–6482 (SLENVVYNLV…NVAVELFAKR (61 aa)) is the Nsp15 N-terminal oligomerization domain. The AV-Nsp11N/CoV-Nsp15M domain occupies 6483 to 6603 (SIRHHPELKL…FAVRKEGQDV (121 aa)). Residues 6653–6792 (TCRTDMEKDF…NDEKVMTFYP (140 aa)) form the NendoU domain. Residues His6683, His6698, Lys6738, Lys6841, Asp6925, Lys6965, and Glu6998 contribute to the active site. Residues 6797–7091 (ASDWKPGYSM…KEVFVGDSLV (295 aa)) enclose the Nidovirus-type SAM-dependent 2'-O-MTase domain.

The protein belongs to the coronaviruses polyprotein 1ab family. As to quaternary structure, interacts with host PHB and PHB2. Interacts with papain-like protease nsp3 and non-structural protein 6. In terms of assembly, monomer. Homodimer. Only the homodimer shows catalytic activity. As to quaternary structure, interacts with nsp8 and nsp12 to form the replication-transcription complex (RTC): nsp12, nsp7, two subunits of nsp8, and up to two subunits of nsp13. Interacts with nsp7, nsp13 and nsp12 to form the replication-transcription complex (RTC): nsp12, nsp7, two subunits of nsp8, and up to two subunits of nsp13. In terms of assembly, interacts with nsp12. As to quaternary structure, interacts with proofreading exoribonuclease nsp14 and 2'-O-methyltransferase nsp16; these interactions enhance nsp14 and nsp16 enzymatic activities. Interacts with nsp7 and nsp8 to form the replication-transcription complex (RTC): nsp12, nsp7, two subunits of nsp8, and up to two subunits of nsp13. Interacts with nsp9. In terms of assembly, interacts with nsp8 to form the replication-transcription complex (RTC): nsp12, nsp7, two subunits of nsp8, and up to two subunits of nsp13. The cofactor is Mn(2+). It depends on Mg(2+) as a cofactor. Specific enzymatic cleavages in vivo by its own proteases yield mature proteins. 3CL-PRO and PL-PRO proteinases are autocatalytically processed.

The protein localises to the host membrane. It localises to the host cytoplasm. The protein resides in the host perinuclear region. It is found in the host endoplasmic reticulum-Golgi intermediate compartment. It catalyses the reaction RNA(n) + a ribonucleoside 5'-triphosphate = RNA(n+1) + diphosphate. It carries out the reaction ATP + H2O = ADP + phosphate + H(+). The enzyme catalyses Thiol-dependent hydrolysis of ester, thioester, amide, peptide and isopeptide bonds formed by the C-terminal Gly of ubiquitin (a 76-residue protein attached to proteins as an intracellular targeting signal).. The catalysed reaction is a 5'-end (N(7)-methyl 5'-triphosphoguanosine)-ribonucleoside in mRNA + S-adenosyl-L-methionine = a 5'-end (N(7)-methyl 5'-triphosphoguanosine)-(2'-O-methyl-ribonucleoside) in mRNA + S-adenosyl-L-homocysteine + H(+). It catalyses the reaction uridylyl-uridylyl-ribonucleotide-RNA = a 3'-end uridylyl-2',3'-cyclophospho-uridine-RNA + a 5'-end dephospho-ribonucleoside-RNA. It carries out the reaction a 5'-end diphospho-ribonucleoside in mRNA + GTP + H(+) = a 5'-end (5'-triphosphoguanosine)-ribonucleoside in mRNA + diphosphate. The enzyme catalyses a 5'-end (5'-triphosphoguanosine)-ribonucleoside in mRNA + S-adenosyl-L-methionine = a 5'-end (N(7)-methyl 5'-triphosphoguanosine)-ribonucleoside in mRNA + S-adenosyl-L-homocysteine. In terms of biological role, the replicase polyprotein of coronaviruses is a multifunctional protein: it contains the activities necessary for the transcription of negative stranded RNA, leader RNA, subgenomic mRNAs and progeny virion RNA as well as proteinases responsible for the cleavage of the polyprotein into functional products. Inhibits host translation by interacting with the 40S ribosomal subunit. The nsp1-40S ribosome complex further induces an endonucleolytic cleavage near the 5'UTR of host mRNAs, targeting them for degradation. Viral mRNAs are not susceptible to nsp1-mediated endonucleolytic RNA cleavage thanks to the presence of a 5'-end leader sequence and are therefore protected from degradation. By suppressing host gene expression, nsp1 facilitates efficient viral gene expression in infected cells and evasion from host immune response. Its function is as follows. May play a role in the modulation of host cell survival signaling pathway by interacting with host PHB and PHB2. Indeed, these two proteins play a role in maintaining the functional integrity of the mitochondria and protecting cells from various stresses. Functionally, responsible for the cleavages located at the N-terminus of the replicase polyprotein. In addition, PL-PRO possesses a deubiquitinating/deISGylating activity and processes both 'Lys-48'- and 'Lys-63'-linked polyubiquitin chains from cellular substrates. Participates together with nsp4 in the assembly of virally-induced cytoplasmic double-membrane vesicles necessary for viral replication. Antagonizes innate immune induction of type I interferon by blocking the phosphorylation, dimerization and subsequent nuclear translocation of host IRF3. Also prevents host NF-kappa-B signaling. In terms of biological role, participates in the assembly of virally-induced cytoplasmic double-membrane vesicles necessary for viral replication. Cleaves the C-terminus of replicase polyprotein at 11 sites. Recognizes substrates containing the core sequence [ILMVF]-Q-|-[SGACN]. Also able to bind an ADP-ribose-1''-phosphate (ADRP). Its function is as follows. Plays a role in the initial induction of autophagosomes from host endoplasmic reticulum. Later, limits the expansion of these phagosomes that are no longer able to deliver viral components to lysosomes. Functionally, forms a hexadecamer with nsp8 (8 subunits of each) that may participate in viral replication by acting as a primase. Alternatively, may synthesize substantially longer products than oligonucleotide primers. In terms of biological role, forms a hexadecamer with nsp7 (8 subunits of each) that may participate in viral replication by acting as a primase. Alternatively, may synthesize substantially longer products than oligonucleotide primers. Forms a primer, NSP9-pU, which is utilized by the polymerase for the initiation of RNA chains. Interacts with ribosome signal recognition particle RNA (SRP). Together with NSP8, suppress protein integration into the cell membrane, thereby disrupting host immune defenses. Its function is as follows. Plays a pivotal role in viral transcription by stimulating both nsp14 3'-5' exoribonuclease and nsp16 2'-O-methyltransferase activities. Therefore plays an essential role in viral mRNAs cap methylation. Functionally, RNA-directed RNA polymerase that catalyzes the transcription of viral genomic and subgenomic RNAs. Acts in complex with nsp7 and nsp8 to transcribe both the minus and positive strands of genomic RNA. The kinase-like NiRAN domain of NSP12 attaches one or more nucleotides to the amino terminus of NSP9, forming a covalent RNA-protein intermediate that serves as transcription/replication primer. Subgenomic RNAs (sgRNAs) are formed by discontinuous transcription: The polymerase has the ability to pause at transcription-regulating sequences (TRS) and jump to the leader TRS, resulting in a major deletion. This creates a series of subgenomic RNAs that are replicated, transcribed and translated. In addition, Nsp12 is a subunit of the viral RNA capping enzyme that catalyzes the RNA guanylyltransferase reaction for genomic and sub-genomic RNAs. Subsequently, the NiRAN domain transfers RNA to GDP, and forms the core cap structure GpppA-RNA. In terms of biological role, multi-functional protein with a zinc-binding domain in N-terminus displaying RNA and DNA duplex-unwinding activities with 5' to 3' polarity. Activity of helicase is dependent on magnesium. Plays a role in viral RNA synthesis through two distinct activities. The N7-guanine methyltransferase activity plays a role in the formation of the cap structure GpppA-RNA. The proofreading exoribonuclease reduces the sensitivity of the virus to RNA mutagens during replication. This activity acts on both ssRNA and dsRNA in a 3'-5' direction. Its function is as follows. Plays a role in viral transcription/replication and prevents the simultaneous activation of host cell dsRNA sensors, such as MDA5/IFIH1, OAS, and PKR. Acts by degrading the 5'-polyuridines generated during replication of the poly(A) region of viral genomic and subgenomic RNAs. Catalyzes a two-step reaction in which a 2'3'-cyclic phosphate (2'3'-cP) is first generated by 2'-O transesterification, which is then hydrolyzed to a 3'-phosphate (3'-P). If not degraded, poly(U) RNA would hybridize with poly(A) RNA tails and activate host dsRNA sensors. Functionally, methyltransferase that mediates mRNA cap 2'-O-ribose methylation to the 5'-cap structure of viral mRNAs. N7-methyl guanosine cap is a prerequisite for binding of nsp16. Therefore plays an essential role in viral mRNAs cap methylation which is essential to evade immune system. The chain is Replicase polyprotein 1ab (rep) from Bos taurus (Bovine).